Reading from the N-terminus, the 194-residue chain is Adenylate kinase isoenzyme 1 (194 aa).

An N-acetylmethionine modification is found at methionine 1. Position 18–23 (18–23 (GSGKGT)) interacts with ATP. Serine 38 is subject to Phosphoserine. Residues 38–67 (STGDLLRAEVSSGSARGKMLSEIMEKGQLV) form an NMP region. Residues threonine 39, arginine 44, 65-67 (QLV), 94-97 (GYPR), and glutamine 101 contribute to the AMP site. The LID stretch occupies residues 131 to 141 (KRGETSGRVDD). ATP is bound at residue arginine 132. AMP is bound by residues arginine 138 and arginine 149. Glycine 177 provides a ligand contact to ATP.

The protein belongs to the adenylate kinase family. AK1 subfamily. Monomer. Requires Mg(2+) as cofactor.

The protein resides in the cytoplasm. It carries out the reaction a ribonucleoside 5'-phosphate + ATP = a ribonucleoside 5'-diphosphate + ADP. The enzyme catalyses AMP + ATP = 2 ADP. It catalyses the reaction dAMP + ATP = dADP + ADP. The catalysed reaction is dATP + AMP = dADP + ADP. It carries out the reaction dAMP + dATP = 2 dADP. The enzyme catalyses a 2'-deoxyribonucleoside 5'-diphosphate + ATP = a 2'-deoxyribonucleoside 5'-triphosphate + ADP. It catalyses the reaction a ribonucleoside 5'-diphosphate + ATP = a ribonucleoside 5'-triphosphate + ADP. The catalysed reaction is CDP + GTP = CTP + GDP. It carries out the reaction GDP + ATP = GTP + ADP. The enzyme catalyses UDP + ATP = UTP + ADP. It catalyses the reaction GTP + UDP = UTP + GDP. The catalysed reaction is dTDP + GTP = dTTP + GDP. It carries out the reaction dCDP + GTP = dCTP + GDP. The enzyme catalyses dGDP + ATP = dGTP + ADP. It catalyses the reaction dADP + GTP = dATP + GDP. The catalysed reaction is thiamine diphosphate + ADP = thiamine triphosphate + AMP. Catalyzes the reversible transfer of the terminal phosphate group between ATP and AMP. Also displays broad nucleoside diphosphate kinase activity. Plays an important role in cellular energy homeostasis and in adenine nucleotide metabolism. Also catalyzes at a very low rate the synthesis of thiamine triphosphate (ThTP) from thiamine diphosphate (ThDP) and ADP. In Sus scrofa (Pig), this protein is Adenylate kinase isoenzyme 1.